The primary structure comprises 330 residues: Diacylglycerol kinase (330 aa).

In terms of domain architecture, DAGKc spans 1–132 (MRKCARIIYN…VDIGKMNNRY (132 aa)). Residues 10–14 (NPTSG), threonine 41, 67–73 (GDGTLNE), and threonine 94 contribute to the ATP site. Positions 213, 216, and 218 each coordinate Mg(2+). The active-site Proton acceptor is the glutamate 273.

Belongs to the diacylglycerol/lipid kinase family. Homodimer. The cofactor is Mg(2+).

It carries out the reaction a 1,2-diacyl-sn-glycerol + ATP = a 1,2-diacyl-sn-glycero-3-phosphate + ADP + H(+). Functionally, catalyzes the phosphorylation of diacylglycerol (DAG) into phosphatidic acid. Is a key enzyme involved in the production of lipoteichoic acid by reintroducing DAG formed from the breakdown of membrane phospholipids into the phosphatidylglycerol biosynthetic pathway. The protein is Diacylglycerol kinase (dagK) of Staphylococcus haemolyticus (strain JCSC1435).